A 275-amino-acid chain; its full sequence is 4-diphosphocytidyl-2-C-methyl-D-erythritol kinase (275 aa).

Lys-14 is an active-site residue. An ATP-binding site is contributed by 98 to 108 (PMGAGLGGGSS). The active site involves Asp-140.

The protein belongs to the GHMP kinase family. IspE subfamily.

The catalysed reaction is 4-CDP-2-C-methyl-D-erythritol + ATP = 4-CDP-2-C-methyl-D-erythritol 2-phosphate + ADP + H(+). Its pathway is isoprenoid biosynthesis; isopentenyl diphosphate biosynthesis via DXP pathway; isopentenyl diphosphate from 1-deoxy-D-xylulose 5-phosphate: step 3/6. Functionally, catalyzes the phosphorylation of the position 2 hydroxy group of 4-diphosphocytidyl-2C-methyl-D-erythritol. The protein is 4-diphosphocytidyl-2-C-methyl-D-erythritol kinase of Francisella philomiragia subsp. philomiragia (strain ATCC 25017 / CCUG 19701 / FSC 153 / O#319-036).